We begin with the raw amino-acid sequence, 623 residues long: V-type proton ATPase catalytic subunit A (623 aa).

Position 252 to 259 (252 to 259) interacts with ATP; the sequence is GAFGCGKT.

Belongs to the ATPase alpha/beta chains family. In terms of assembly, V-ATPase is a heteromultimeric enzyme composed of a peripheral catalytic V1 complex (main components: subunits A, B, C, D, E, and F) attached to an integral membrane V0 proton pore complex (main component: the proteolipid protein).

The catalysed reaction is ATP + H2O + 4 H(+)(in) = ADP + phosphate + 5 H(+)(out). In terms of biological role, catalytic subunit of the peripheral V1 complex of vacuolar ATPase. V-ATPase vacuolar ATPase is responsible for acidifying a variety of intracellular compartments in eukaryotic cells. This Brassica napus (Rape) protein is V-type proton ATPase catalytic subunit A.